Consider the following 205-residue polypeptide: NADH-quinone oxidoreductase subunit I (205 aa).

4Fe-4S ferredoxin-type domains are found at residues 75 to 104 (RLLE…METS) and 114 to 143 (HEYT…HGGR). Residues Cys84, Cys87, Cys90, Cys94, Cys123, Cys126, Cys129, and Cys133 each contribute to the [4Fe-4S] cluster site.

It belongs to the complex I 23 kDa subunit family. In terms of assembly, NDH-1 is composed of 14 different subunits. Subunits NuoA, H, J, K, L, M, N constitute the membrane sector of the complex. [4Fe-4S] cluster serves as cofactor.

Its subcellular location is the cell inner membrane. The enzyme catalyses a quinone + NADH + 5 H(+)(in) = a quinol + NAD(+) + 4 H(+)(out). NDH-1 shuttles electrons from NADH, via FMN and iron-sulfur (Fe-S) centers, to quinones in the respiratory chain. The immediate electron acceptor for the enzyme in this species is believed to be ubiquinone. Couples the redox reaction to proton translocation (for every two electrons transferred, four hydrogen ions are translocated across the cytoplasmic membrane), and thus conserves the redox energy in a proton gradient. This is NADH-quinone oxidoreductase subunit I from Wolinella succinogenes (strain ATCC 29543 / DSM 1740 / CCUG 13145 / JCM 31913 / LMG 7466 / NCTC 11488 / FDC 602W) (Vibrio succinogenes).